Reading from the N-terminus, the 202-residue chain is uncharacterized protein (202 aa).

It is found in the mitochondrion. This is an uncharacterized protein from Schizosaccharomyces pombe (strain 972 / ATCC 24843) (Fission yeast).